The following is a 647-amino-acid chain: DNA ligase (647 aa).

NAD(+) is bound by residues 30–34, 79–80, and glutamate 105; these read DEEYD and SM. Lysine 107 functions as the N6-AMP-lysine intermediate in the catalytic mechanism. NAD(+) is bound by residues arginine 128, glutamate 162, and lysine 301. 4 residues coordinate Zn(2+): cysteine 395, cysteine 398, cysteine 411, and cysteine 416. The region spanning 570 to 647 is the BRCT domain; that stretch reads KSDGVIFGKT…ESAFNELVKE (78 aa).

It belongs to the NAD-dependent DNA ligase family. LigA subfamily. Mg(2+) is required as a cofactor. Mn(2+) serves as cofactor.

The catalysed reaction is NAD(+) + (deoxyribonucleotide)n-3'-hydroxyl + 5'-phospho-(deoxyribonucleotide)m = (deoxyribonucleotide)n+m + AMP + beta-nicotinamide D-nucleotide.. Functionally, DNA ligase that catalyzes the formation of phosphodiester linkages between 5'-phosphoryl and 3'-hydroxyl groups in double-stranded DNA using NAD as a coenzyme and as the energy source for the reaction. It is essential for DNA replication and repair of damaged DNA. This is DNA ligase from Campylobacter jejuni (strain RM1221).